A 290-amino-acid polypeptide reads, in one-letter code: Prepilin leader peptidase/N-methyltransferase (290 aa).

A helical transmembrane segment spans residues 14–34 (LYFSLVFLFSLMIGSFLNVVI). Positions 74, 77, 99, and 102 each coordinate Zn(2+). 6 helical membrane-spanning segments follow: residues 106 to 126 (ISARYPLVELLTALLSVAVAM), 130 to 150 (PGWGTLAALLLTWVLVALTFI), 161 to 181 (LTLPLLWGGLLFNLLGGFVSL), 185 to 205 (VIGAMAGYLVLWSLYWAFKLL), 232 to 252 (PIVLLLSSLVGAFMGIGLILL), and 261 to 281 (IPFGPYLAIAGWIALLWGDSI).

It belongs to the peptidase A24 family. Requires Zn(2+) as cofactor.

The protein resides in the cell inner membrane. The enzyme catalyses Typically cleaves a -Gly-|-Phe- bond to release an N-terminal, basic peptide of 5-8 residues from type IV prepilin, and then N-methylates the new N-terminal amino group, the methyl donor being S-adenosyl-L-methionine.. In terms of biological role, plays an essential role in type IV pili and type II pseudopili formation by proteolytically removing the leader sequence from substrate proteins and subsequently monomethylating the alpha-amino group of the newly exposed N-terminal phenylalanine. The chain is Prepilin leader peptidase/N-methyltransferase (tapD) from Aeromonas hydrophila.